The following is a 370-amino-acid chain: tRNA N(3)-cytidine methyltransferase METTL2 (370 aa).

Tryptophan 72, tyrosine 76, glycine 181, aspartate 206, aspartate 232, leucine 233, and isoleucine 253 together coordinate S-adenosyl-L-methionine.

This sequence belongs to the methyltransferase superfamily. METL family. In terms of assembly, monomer.

The protein resides in the cytoplasm. The catalysed reaction is cytidine(32) in tRNA(Thr) + S-adenosyl-L-methionine = N(3)-methylcytidine(32) in tRNA(Thr) + S-adenosyl-L-homocysteine + H(+). It catalyses the reaction cytidine(32) in tRNA(Arg)(CCU) + S-adenosyl-L-methionine = N(3)-methylcytidine(32) in tRNA(Arg)(CCU) + S-adenosyl-L-homocysteine + H(+). Its function is as follows. S-adenosyl-L-methionine-dependent methyltransferase that mediates N(3)-methylcytidine modification of residue 32 of the tRNA anticodon loop of tRNA(Thr)(UGU) and tRNA(Arg)(CCU). N(3)-methylcytidine methylation by METTL2 requires the N6-threonylcarbamoylation of tRNA (t6A37) by the EKC/KEOPS complex as prerequisite. The sequence is that of tRNA N(3)-cytidine methyltransferase METTL2 (METTL2) from Gallus gallus (Chicken).